The following is a 526-amino-acid chain: Bifunctional purine biosynthesis protein PurH (526 aa).

The 145-residue stretch at 1–145 (MIRTALLSVS…KNHQDVTVLI (145 aa)) folds into the MGS-like domain.

It belongs to the PurH family.

It carries out the reaction (6R)-10-formyltetrahydrofolate + 5-amino-1-(5-phospho-beta-D-ribosyl)imidazole-4-carboxamide = 5-formamido-1-(5-phospho-D-ribosyl)imidazole-4-carboxamide + (6S)-5,6,7,8-tetrahydrofolate. The enzyme catalyses IMP + H2O = 5-formamido-1-(5-phospho-D-ribosyl)imidazole-4-carboxamide. It functions in the pathway purine metabolism; IMP biosynthesis via de novo pathway; 5-formamido-1-(5-phospho-D-ribosyl)imidazole-4-carboxamide from 5-amino-1-(5-phospho-D-ribosyl)imidazole-4-carboxamide (10-formyl THF route): step 1/1. Its pathway is purine metabolism; IMP biosynthesis via de novo pathway; IMP from 5-formamido-1-(5-phospho-D-ribosyl)imidazole-4-carboxamide: step 1/1. The protein is Bifunctional purine biosynthesis protein PurH of Polynucleobacter necessarius subsp. necessarius (strain STIR1).